Consider the following 298-residue polypeptide: Diphthine methyl ester synthase (298 aa).

S-adenosyl-L-methionine contacts are provided by residues Leu-9, Asp-85, Gly-88, 113 to 114 (SV), Leu-164, Leu-222, and His-247.

It belongs to the diphthine synthase family.

It is found in the cytoplasm. It carries out the reaction 2-[(3S)-amino-3-carboxypropyl]-L-histidyl-[translation elongation factor 2] + 4 S-adenosyl-L-methionine = diphthine methyl ester-[translation elongation factor 2] + 4 S-adenosyl-L-homocysteine + 3 H(+). The protein operates within protein modification; peptidyl-diphthamide biosynthesis. S-adenosyl-L-methionine-dependent methyltransferase that catalyzes four methylations of the modified target histidine residue in translation elongation factor 2 (EF-2), to form an intermediate called diphthine methyl ester. The four successive methylation reactions represent the second step of diphthamide biosynthesis. This is Diphthine methyl ester synthase (DPH5) from Eremothecium gossypii (strain ATCC 10895 / CBS 109.51 / FGSC 9923 / NRRL Y-1056) (Yeast).